A 450-amino-acid chain; its full sequence is Bifunctional protein GlmU (450 aa).

Residues 1–229 are pyrophosphorylase; it reads MGVALIVLAA…EAETLGINTR (229 aa). Residues 8 to 11, Lys-22, Gln-75, 80 to 81, 103 to 105, Gly-141, Glu-155, Asn-170, and Asn-227 each bind UDP-N-acetyl-alpha-D-glucosamine; these read LAAG, GT, and YGD. Asp-105 is a Mg(2+) binding site. Asn-227 is a Mg(2+) binding site. The segment at 230–250 is linker; that stretch reads TELAAAEQAFQARARARALED. The N-acetyltransferase stretch occupies residues 251–450; sequence GVTLADPATT…RARKSAKGAQ (200 aa). Residues Arg-316 and Lys-334 each contribute to the UDP-N-acetyl-alpha-D-glucosamine site. His-346 acts as the Proton acceptor in catalysis. UDP-N-acetyl-alpha-D-glucosamine contacts are provided by Tyr-349 and Asn-360. Acetyl-CoA-binding positions include Ala-363, 369–370, Ser-388, Thr-406, and Arg-423; that span reads NY.

This sequence in the N-terminal section; belongs to the N-acetylglucosamine-1-phosphate uridyltransferase family. It in the C-terminal section; belongs to the transferase hexapeptide repeat family. In terms of assembly, homotrimer. It depends on Mg(2+) as a cofactor.

The protein resides in the cytoplasm. The enzyme catalyses alpha-D-glucosamine 1-phosphate + acetyl-CoA = N-acetyl-alpha-D-glucosamine 1-phosphate + CoA + H(+). It carries out the reaction N-acetyl-alpha-D-glucosamine 1-phosphate + UTP + H(+) = UDP-N-acetyl-alpha-D-glucosamine + diphosphate. Its pathway is nucleotide-sugar biosynthesis; UDP-N-acetyl-alpha-D-glucosamine biosynthesis; N-acetyl-alpha-D-glucosamine 1-phosphate from alpha-D-glucosamine 6-phosphate (route II): step 2/2. It functions in the pathway nucleotide-sugar biosynthesis; UDP-N-acetyl-alpha-D-glucosamine biosynthesis; UDP-N-acetyl-alpha-D-glucosamine from N-acetyl-alpha-D-glucosamine 1-phosphate: step 1/1. It participates in bacterial outer membrane biogenesis; LPS lipid A biosynthesis. Functionally, catalyzes the last two sequential reactions in the de novo biosynthetic pathway for UDP-N-acetylglucosamine (UDP-GlcNAc). The C-terminal domain catalyzes the transfer of acetyl group from acetyl coenzyme A to glucosamine-1-phosphate (GlcN-1-P) to produce N-acetylglucosamine-1-phosphate (GlcNAc-1-P), which is converted into UDP-GlcNAc by the transfer of uridine 5-monophosphate (from uridine 5-triphosphate), a reaction catalyzed by the N-terminal domain. In Dinoroseobacter shibae (strain DSM 16493 / NCIMB 14021 / DFL 12), this protein is Bifunctional protein GlmU.